Consider the following 200-residue polypeptide: Protein GrpE (200 aa).

Belongs to the GrpE family. Homodimer.

The protein localises to the cytoplasm. Functionally, participates actively in the response to hyperosmotic and heat shock by preventing the aggregation of stress-denatured proteins, in association with DnaK and GrpE. It is the nucleotide exchange factor for DnaK and may function as a thermosensor. Unfolded proteins bind initially to DnaJ; upon interaction with the DnaJ-bound protein, DnaK hydrolyzes its bound ATP, resulting in the formation of a stable complex. GrpE releases ADP from DnaK; ATP binding to DnaK triggers the release of the substrate protein, thus completing the reaction cycle. Several rounds of ATP-dependent interactions between DnaJ, DnaK and GrpE are required for fully efficient folding. This chain is Protein GrpE, found in Shewanella piezotolerans (strain WP3 / JCM 13877).